We begin with the raw amino-acid sequence, 189 residues long: Crossover junction endodeoxyribonuclease RuvC (189 aa).

Active-site residues include aspartate 8, glutamate 67, and aspartate 139. Residues aspartate 8, glutamate 67, and aspartate 139 each coordinate Mg(2+).

This sequence belongs to the RuvC family. In terms of assembly, homodimer which binds Holliday junction (HJ) DNA. The HJ becomes 2-fold symmetrical on binding to RuvC with unstacked arms; it has a different conformation from HJ DNA in complex with RuvA. In the full resolvosome a probable DNA-RuvA(4)-RuvB(12)-RuvC(2) complex forms which resolves the HJ. The cofactor is Mg(2+).

Its subcellular location is the cytoplasm. The enzyme catalyses Endonucleolytic cleavage at a junction such as a reciprocal single-stranded crossover between two homologous DNA duplexes (Holliday junction).. In terms of biological role, the RuvA-RuvB-RuvC complex processes Holliday junction (HJ) DNA during genetic recombination and DNA repair. Endonuclease that resolves HJ intermediates. Cleaves cruciform DNA by making single-stranded nicks across the HJ at symmetrical positions within the homologous arms, yielding a 5'-phosphate and a 3'-hydroxyl group; requires a central core of homology in the junction. The consensus cleavage sequence is 5'-(A/T)TT(C/G)-3'. Cleavage occurs on the 3'-side of the TT dinucleotide at the point of strand exchange. HJ branch migration catalyzed by RuvA-RuvB allows RuvC to scan DNA until it finds its consensus sequence, where it cleaves and resolves the cruciform DNA. This Histophilus somni (strain 129Pt) (Haemophilus somnus) protein is Crossover junction endodeoxyribonuclease RuvC.